The primary structure comprises 39 residues: Photosystem II reaction center protein L (39 aa).

A helical transmembrane segment spans residues 18-38 (ILYWGLLLIFVLAVLFSNYFF).

The protein belongs to the PsbL family. PSII is composed of 1 copy each of membrane proteins PsbA, PsbB, PsbC, PsbD, PsbE, PsbF, PsbH, PsbI, PsbJ, PsbK, PsbL, PsbM, PsbT, PsbX, PsbY, PsbZ, Psb30/Ycf12, at least 3 peripheral proteins of the oxygen-evolving complex and a large number of cofactors. It forms dimeric complexes.

The protein localises to the plastid membrane. Its function is as follows. One of the components of the core complex of photosystem II (PSII). PSII is a light-driven water:plastoquinone oxidoreductase that uses light energy to abstract electrons from H(2)O, generating O(2) and a proton gradient subsequently used for ATP formation. It consists of a core antenna complex that captures photons, and an electron transfer chain that converts photonic excitation into a charge separation. This subunit is found at the monomer-monomer interface and is required for correct PSII assembly and/or dimerization. The protein is Photosystem II reaction center protein L of Cuscuta pentagona (Five-angled dodder).